We begin with the raw amino-acid sequence, 345 residues long: Anthranilate phosphoribosyltransferase (345 aa).

Residues G83, 86–87, T91, 93–96, 111–119, and S123 each bind 5-phospho-alpha-D-ribose 1-diphosphate; these read GD, NIST, and KHGNRNLSS. G83 contributes to the anthranilate binding site. S95 serves as a coordination point for Mg(2+). N114 is an anthranilate binding site. Position 169 (R169) interacts with anthranilate. Positions 228 and 229 each coordinate Mg(2+).

Belongs to the anthranilate phosphoribosyltransferase family. As to quaternary structure, homodimer. Mg(2+) is required as a cofactor.

It catalyses the reaction N-(5-phospho-beta-D-ribosyl)anthranilate + diphosphate = 5-phospho-alpha-D-ribose 1-diphosphate + anthranilate. It functions in the pathway amino-acid biosynthesis; L-tryptophan biosynthesis; L-tryptophan from chorismate: step 2/5. Catalyzes the transfer of the phosphoribosyl group of 5-phosphorylribose-1-pyrophosphate (PRPP) to anthranilate to yield N-(5'-phosphoribosyl)-anthranilate (PRA). This Paracoccus denitrificans (strain Pd 1222) protein is Anthranilate phosphoribosyltransferase.